The primary structure comprises 84 residues: Large ribosomal subunit protein bL27 (84 aa).

The interval 1-20 (MAHKKSGGASRNGRDSNPKY) is disordered.

The protein belongs to the bacterial ribosomal protein bL27 family.

The polypeptide is Large ribosomal subunit protein bL27 (Dictyoglomus thermophilum (strain ATCC 35947 / DSM 3960 / H-6-12)).